The following is a 98-amino-acid chain: NADH-ubiquinone oxidoreductase chain 4L (98 aa).

3 helical membrane passes run 1–21 (MSMVYINIFLAFTLSFMGLLI), 30–50 (LLCLEGMMLSLFVMMTITILI), and 61–81 (IILLVFAACEAALGLSLLVMI).

It belongs to the complex I subunit 4L family. Core subunit of respiratory chain NADH dehydrogenase (Complex I) which is composed of 45 different subunits.

Its subcellular location is the mitochondrion inner membrane. The catalysed reaction is a ubiquinone + NADH + 5 H(+)(in) = a ubiquinol + NAD(+) + 4 H(+)(out). Functionally, core subunit of the mitochondrial membrane respiratory chain NADH dehydrogenase (Complex I) which catalyzes electron transfer from NADH through the respiratory chain, using ubiquinone as an electron acceptor. Part of the enzyme membrane arm which is embedded in the lipid bilayer and involved in proton translocation. This is NADH-ubiquinone oxidoreductase chain 4L (MT-ND4L) from Neovison vison (American mink).